Reading from the N-terminus, the 564-residue chain is Quinone-dependent D-lactate dehydrogenase (564 aa).

One can recognise an FAD-binding PCMH-type domain in the interval 36-207; it reads GTGNALAVVR…TNLQEKRYQV (172 aa). FAD is bound by residues 70-74, 78-79, glycine 137, serine 144, glycine 154, and valine 256; these read AANTG and GS.

It belongs to the quinone-dependent D-lactate dehydrogenase family. The cofactor is FAD.

The protein localises to the cell inner membrane. The enzyme catalyses (R)-lactate + a quinone = a quinol + pyruvate. Catalyzes the oxidation of D-lactate to pyruvate. The chain is Quinone-dependent D-lactate dehydrogenase from Haemophilus influenzae (strain ATCC 51907 / DSM 11121 / KW20 / Rd).